Here is an 85-residue protein sequence, read N- to C-terminus: Small proline-rich protein 2D (85 aa).

The span at 1 to 11 (MSYQQQQCKQP) shows a compositional bias: low complexity. A disordered region spans residues 1 to 20 (MSYQQQQCKQPCQPPPVCPP). 4 consecutive repeat copies span residues 21 to 29 (KKCPEPCPP), 30 to 38 (LKCPEPCPP), 39 to 47 (PKCPEPCPP), and 48 to 56 (PKCPEPCPE). The tract at residues 21–56 (KKCPEPCPPLKCPEPCPPPKCPEPCPPPKCPEPCPE) is 4 X 9 AA approximate tandem repeats. The segment at 57-85 (PCPPPSCQQKCPPAQPPPPCQQKCPPKSK) is disordered.

The protein belongs to the cornifin (SPRR) family. In terms of tissue distribution, expressed in uterus.

The protein localises to the cytoplasm. Cross-linked envelope protein of keratinocytes. It is a keratinocyte protein that first appears in the cell cytosol, but ultimately becomes cross-linked to membrane proteins by transglutaminase. All that results in the formation of an insoluble envelope beneath the plasma membrane. The chain is Small proline-rich protein 2D (Sprr2d) from Mus musculus (Mouse).